The sequence spans 493 residues: Cobyric acid synthase (493 aa).

Residues 246-440 form the GATase cobBQ-type domain; sequence PIDIAVIKMP…IHGVFDGIVF (195 aa). C326 acts as the Nucleophile in catalysis. Residue H432 is part of the active site.

This sequence belongs to the CobB/CobQ family. CobQ subfamily.

It functions in the pathway cofactor biosynthesis; adenosylcobalamin biosynthesis. Functionally, catalyzes amidations at positions B, D, E, and G on adenosylcobyrinic A,C-diamide. NH(2) groups are provided by glutamine, and one molecule of ATP is hydrogenolyzed for each amidation. This chain is Cobyric acid synthase, found in Clostridium botulinum (strain 657 / Type Ba4).